We begin with the raw amino-acid sequence, 374 residues long: MGTAGKVIKCKAAVLWGVNQPFSIEEIEVAPPKAKEVRVKILATGICRTDDHIIKGSMVSKFPVIVGHEAVGVVESVGEGVTTVRPGDKVIPLFLPQCRECNACLNPEGNLCIRSDLTGRGVLADGTTRFTCKGKPVQHFMNTSTFTEYTVLDESSVAKVDGAAPPEKACLIGCGFSTGYGAAVKTAKVTPGSTCVVFGLGGVGLSVIMGCKAAGASRIIGIDINKDKFQKALAVGATECISPKDSTKPISEVLSDMTGNTIQYTFEVIGRLETMVDALSSCHMNYGTSVVVGAPPSAKMLTYDPMLLFTGRTWKGCVFGGWKSRDDVPKLVTEFLEKKFDLDQLITHTLPFNNINEGFELLYSGKSIRTVLTF.

Cys-47, His-68, Cys-98, Cys-101, Cys-104, Cys-112, and Cys-174 together coordinate Zn(2+). Residues 199-204 (GLGGVG), Asp-223, Lys-228, 292-294 (VGA), and Arg-369 contribute to the NAD(+) site.

It belongs to the zinc-containing alcohol dehydrogenase family. Class-IV subfamily. As to quaternary structure, homodimer. Zn(2+) serves as cofactor. In terms of tissue distribution, high expression in the stomach mucosa. Lower expression in eye, thymus, skin and ovary. Very low expression in small intestine, liver and uterus.

It localises to the cytoplasm. It carries out the reaction a primary alcohol + NAD(+) = an aldehyde + NADH + H(+). It catalyses the reaction 10-hydroxydecanoate + NAD(+) = 10-oxodecanoate + NADH + H(+). The catalysed reaction is all-trans-retinol + NAD(+) = all-trans-retinal + NADH + H(+). The enzyme catalyses 9-cis-retinol + NAD(+) = 9-cis-retinal + NADH + H(+). It carries out the reaction all-trans-3,4-didehydroretinol + NAD(+) = all-trans-3,4-didehydroretinal + NADH + H(+). It catalyses the reaction all-trans-4-hydroxyretinol + NAD(+) = all-trans-4-hydroxyretinal + NADH + H(+). The catalysed reaction is all-trans-4-oxoretinol + NAD(+) = all-trans-4-oxoretinal + NADH + H(+). The enzyme catalyses 12-hydroxydodecanoate + NAD(+) = 12-oxododecanoate + NADH + H(+). It carries out the reaction 16-hydroxyhexadecanoate + NAD(+) = 16-oxohexadecanoate + NADH + H(+). It catalyses the reaction hexan-1-ol + NAD(+) = hexanal + NADH + H(+). The catalysed reaction is (E)-hex-2-en-1-ol + NAD(+) = (E)-hex-2-enal + NADH + H(+). The enzyme catalyses (E)-4-hydroxynon-2-en-1-ol + NAD(+) = (E)-4-hydroxynon-2-enal + NADH + H(+). Retinol oxidation is inhibited by the detergent Tween 80. Ethanol inhibits both all-trans-retinol and 9-cis-retinol oxidation. 13-cis-retinol is an effective competitive inhibitor of the 9-cis-retinol oxidation. All-trans-retinoic acid is a powerful inhibitor of all-trans-retinol oxidation. 13-cis-retinoic acid is a powerful inhibitor of all-trans-retinol oxidation. Cimetidine competitively inhibited ethanol oxidation. Its function is as follows. Catalyzes the NAD-dependent oxidation of all-trans-retinol, alcohol, aldehyde and omega-hydroxy fatty acids and their derivatives. Oxidizes preferentially all trans-retinol, all-trans-4-hydroxyretinol, 9-cis-retinol, 2-hexenol, and long chain omega-hydroxy fatty acids such as juniperic acid. In vitro can also catalyze the NADH-dependent reduction of all-trans-retinal and aldehydes and their derivatives. Reduces preferentially all trans-retinal, all-trans-4-oxoretinal and hexanal. Catalyzes in the oxidative direction with higher efficiency. Therefore may participate in retinoid metabolism, fatty acid omega-oxidation, and elimination of cytotoxic aldehydes produced by lipid peroxidation. This chain is All-trans-retinol dehydrogenase [NAD(+)] ADH7 (Adh7), found in Mus musculus (Mouse).